Here is a 471-residue protein sequence, read N- to C-terminus: 3-isopropylmalate dehydratase large subunit (471 aa).

C347, C407, and C410 together coordinate [4Fe-4S] cluster.

This sequence belongs to the aconitase/IPM isomerase family. LeuC type 1 subfamily. Heterodimer of LeuC and LeuD. The cofactor is [4Fe-4S] cluster.

It catalyses the reaction (2R,3S)-3-isopropylmalate = (2S)-2-isopropylmalate. The protein operates within amino-acid biosynthesis; L-leucine biosynthesis; L-leucine from 3-methyl-2-oxobutanoate: step 2/4. In terms of biological role, catalyzes the isomerization between 2-isopropylmalate and 3-isopropylmalate, via the formation of 2-isopropylmaleate. The chain is 3-isopropylmalate dehydratase large subunit from Buchnera aphidicola subsp. Baizongia pistaciae (strain Bp).